A 490-amino-acid polypeptide reads, in one-letter code: Arginine decarboxylase (490 aa).

Lys-226 is subject to N6-(pyridoxal phosphate)lysine.

This sequence belongs to the Orn/Lys/Arg decarboxylase class-I family. Pyridoxal 5'-phosphate is required as a cofactor.

Its subcellular location is the cytoplasm. It catalyses the reaction L-arginine + H(+) = agmatine + CO2. The protein operates within amine and polyamine biosynthesis; agmatine biosynthesis; agmatine from L-arginine: step 1/1. Catalyzes the formation of agmatine from arginine. This Bacillus subtilis (strain 168) protein is Arginine decarboxylase (speA).